Here is a 340-residue protein sequence, read N- to C-terminus: Phosphoribosylformylglycinamidine cyclo-ligase (340 aa).

The protein belongs to the AIR synthase family.

It localises to the cytoplasm. The catalysed reaction is 2-formamido-N(1)-(5-O-phospho-beta-D-ribosyl)acetamidine + ATP = 5-amino-1-(5-phospho-beta-D-ribosyl)imidazole + ADP + phosphate + H(+). It participates in purine metabolism; IMP biosynthesis via de novo pathway; 5-amino-1-(5-phospho-D-ribosyl)imidazole from N(2)-formyl-N(1)-(5-phospho-D-ribosyl)glycinamide: step 2/2. This Streptococcus agalactiae serotype V (strain ATCC BAA-611 / 2603 V/R) protein is Phosphoribosylformylglycinamidine cyclo-ligase.